A 430-amino-acid chain; its full sequence is UDP-N-acetylglucosamine 1-carboxyvinyltransferase (430 aa).

K22–N23 is a binding site for phosphoenolpyruvate. UDP-N-acetyl-alpha-D-glucosamine is bound at residue R102. C126 acts as the Proton donor in catalysis. Position 126 is a 2-(S-cysteinyl)pyruvic acid O-phosphothioketal (C126). UDP-N-acetyl-alpha-D-glucosamine contacts are provided by residues R131–L135, K172–V175, D317, and I339.

It belongs to the EPSP synthase family. MurA subfamily.

The protein resides in the cytoplasm. It carries out the reaction phosphoenolpyruvate + UDP-N-acetyl-alpha-D-glucosamine = UDP-N-acetyl-3-O-(1-carboxyvinyl)-alpha-D-glucosamine + phosphate. It functions in the pathway cell wall biogenesis; peptidoglycan biosynthesis. In terms of biological role, cell wall formation. Adds enolpyruvyl to UDP-N-acetylglucosamine. This chain is UDP-N-acetylglucosamine 1-carboxyvinyltransferase, found in Rhizobium meliloti (strain 1021) (Ensifer meliloti).